A 273-amino-acid polypeptide reads, in one-letter code: Putative pyruvate, phosphate dikinase regulatory protein (273 aa).

149-156 (GPSRTSKT) contacts ADP.

This sequence belongs to the pyruvate, phosphate/water dikinase regulatory protein family. PDRP subfamily.

The enzyme catalyses N(tele)-phospho-L-histidyl/L-threonyl-[pyruvate, phosphate dikinase] + ADP = N(tele)-phospho-L-histidyl/O-phospho-L-threonyl-[pyruvate, phosphate dikinase] + AMP + H(+). The catalysed reaction is N(tele)-phospho-L-histidyl/O-phospho-L-threonyl-[pyruvate, phosphate dikinase] + phosphate + H(+) = N(tele)-phospho-L-histidyl/L-threonyl-[pyruvate, phosphate dikinase] + diphosphate. Functionally, bifunctional serine/threonine kinase and phosphorylase involved in the regulation of the pyruvate, phosphate dikinase (PPDK) by catalyzing its phosphorylation/dephosphorylation. In Rickettsia felis (strain ATCC VR-1525 / URRWXCal2) (Rickettsia azadi), this protein is Putative pyruvate, phosphate dikinase regulatory protein.